Reading from the N-terminus, the 157-residue chain is Small ribosomal subunit protein uS7 (157 aa).

Belongs to the universal ribosomal protein uS7 family. As to quaternary structure, part of the 30S ribosomal subunit. Contacts proteins S9 and S11.

Functionally, one of the primary rRNA binding proteins, it binds directly to 16S rRNA where it nucleates assembly of the head domain of the 30S subunit. Is located at the subunit interface close to the decoding center, probably blocks exit of the E-site tRNA. The polypeptide is Small ribosomal subunit protein uS7 (Caldicellulosiruptor saccharolyticus (strain ATCC 43494 / DSM 8903 / Tp8T 6331)).